A 181-amino-acid chain; its full sequence is Proteinase inhibitor B (181 aa).

Positions 1 to 24 are cleaved as a signal peptide; it reads MAASNALLLISGALLISLAVLCQG. Intrachain disulfides connect C67/C113, C134/C143, and C136/C139.

The protein belongs to the protease inhibitor I3 (leguminous Kunitz-type inhibitor) family.

It localises to the secreted. Possesses two reactive sites. Inhibits two molecules of trypsin simultaneously. Inhibits efficiently kallikrein, but chymotrypsin weakly. The chain is Proteinase inhibitor B from Sagittaria sagittifolia (Arrowhead).